Here is a 158-residue protein sequence, read N- to C-terminus: uncharacterized protein (158 aa).

The protein belongs to the mimivirus L223/L227/L812 family.

This is an uncharacterized protein from Acanthamoeba polyphaga mimivirus (APMV).